The sequence spans 122 residues: Large ribosomal subunit protein uL14c (122 aa).

It belongs to the universal ribosomal protein uL14 family. In terms of assembly, part of the 50S ribosomal subunit.

The protein localises to the plastid. It is found in the chloroplast. Binds to 23S rRNA. The sequence is that of Large ribosomal subunit protein uL14c from Chara vulgaris (Common stonewort).